Reading from the N-terminus, the 126-residue chain is Large ribosomal subunit protein eL28 (126 aa).

Position 2 is an N-acetylserine (Ser-2).

Belongs to the eukaryotic ribosomal protein eL28 family.

This Caenorhabditis elegans protein is Large ribosomal subunit protein eL28 (rpl-28).